The sequence spans 90 residues: UPF0367 protein Npun_R4552 (90 aa).

It belongs to the UPF0367 family.

This is UPF0367 protein Npun_R4552 from Nostoc punctiforme (strain ATCC 29133 / PCC 73102).